The chain runs to 205 residues: MDLQYFILAFSSIFSILNPFGAVPVFITLTESYPKKERDLVAKKTVIYALAILLAFALFGEWILKFFGISLDAFKIAGGILLLLISLDMVRGQQEAKIHRKEIEAAYEIDEIALMPLATPLLAGPGSITACMVAMAEASDIGDKFLVILAILLSLGITYLTLLSAESVLDRIGRLGIRILTRMMGLILTAIAVQMIVNGIRGALL.

6 consecutive transmembrane segments (helical) span residues 7 to 27 (ILAF…PVFI), 49 to 69 (ALAI…FFGI), 70 to 90 (SLDA…LDMV), 112 to 132 (IALM…TACM), 145 to 165 (FLVI…LLSA), and 185 to 205 (GLIL…GALL).

This sequence belongs to the UPF0056 (MarC) family.

The protein localises to the cell membrane. This chain is UPF0056 membrane protein MJ1677, found in Methanocaldococcus jannaschii (strain ATCC 43067 / DSM 2661 / JAL-1 / JCM 10045 / NBRC 100440) (Methanococcus jannaschii).